The following is a 358-amino-acid chain: MATIVVAMSGGVDSSAVAAMLHEQGHNVIGITLQLYDYGIAVGKKNACCAGQDIYDAKMVANKLGIPHYVLDYENKFKESVIDNFVDSYLHGETPLPCVQCNKSVKFRDLINTAKELGADKLATGHYVRKINGYNGAELHTGLDTTKDQSYFLFTITREQLEYLSFPLGGFTKYETRKLASKFGLDIADKPDSQDICFVPDGNYKTVINKIRPEANTSGKIVHINGFELGEHSGIINYTIGQRRGLGIAYNEPLYVVKIDPSNNIVYVGQESALHVHEFIIKDVNWLADEIKDHEKLAVDVKIRSTRPPCHAEISKLCNDRIKVKFLSKEKAVAPGQACVIYAGERVLGGGWITSNIS.

Residues 7-14 (AMSGGVDS) and leucine 33 contribute to the ATP site. The Nucleophile role is filled by cysteine 101. Cysteine 101 and cysteine 197 form a disulfide bridge. ATP is bound at residue glycine 125. Positions 147–149 (KDQ) are interaction with tRNA. Residue cysteine 197 is the Cysteine persulfide intermediate of the active site.

It belongs to the MnmA/TRMU family.

The protein localises to the cytoplasm. The enzyme catalyses S-sulfanyl-L-cysteinyl-[protein] + uridine(34) in tRNA + AH2 + ATP = 2-thiouridine(34) in tRNA + L-cysteinyl-[protein] + A + AMP + diphosphate + H(+). Functionally, catalyzes the 2-thiolation of uridine at the wobble position (U34) of tRNA, leading to the formation of s(2)U34. This is tRNA-specific 2-thiouridylase MnmA from Rickettsia prowazekii (strain Madrid E).